We begin with the raw amino-acid sequence, 321 residues long: CRISPR-associated endonuclease Cas1 2 (321 aa).

Mn(2+) is bound by residues glutamate 150, histidine 213, and glutamate 228.

This sequence belongs to the CRISPR-associated endonuclease Cas1 family. As to quaternary structure, homodimer, forms a heterotetramer with a Cas2 homodimer. It depends on Mg(2+) as a cofactor. The cofactor is Mn(2+).

CRISPR (clustered regularly interspaced short palindromic repeat), is an adaptive immune system that provides protection against mobile genetic elements (viruses, transposable elements and conjugative plasmids). CRISPR clusters contain spacers, sequences complementary to antecedent mobile elements, and target invading nucleic acids. CRISPR clusters are transcribed and processed into CRISPR RNA (crRNA). Acts as a dsDNA endonuclease. Involved in the integration of spacer DNA into the CRISPR cassette. The polypeptide is CRISPR-associated endonuclease Cas1 2 (Moorella thermoacetica (strain ATCC 39073 / JCM 9320)).